We begin with the raw amino-acid sequence, 159 residues long: Succinate dehydrogenase [ubiquinone] cytochrome b small subunit, mitochondrial (159 aa).

The transit peptide at 1–56 (MAVLWRLSAVCGAQGGRALLLRTPVVRPAHISAFLQDRPIPEWCGVQHIHLSPGHH) directs the protein to the mitochondrion. At 57-63 (SGSKAAS) the chain is on the mitochondrial matrix side. A helical membrane pass occupies residues 64-85 (LHWTSERVVSVLLLGLLPAAYL). Topologically, residues 86–90 (NPCSA) are mitochondrial intermembrane. The chain crosses the membrane as a helical span at residues 91-111 (MDYSLAATLTLHGHWGLGQVV). His-102 contributes to the heme b binding site. Topologically, residues 112 to 120 (TDYVHGDAS) are mitochondrial matrix. Tyr-114 is an a ubiquinone binding site. A helical membrane pass occupies residues 121–142 (QKAAKAGLLALSALTFAGLCYF). Topologically, residues 143–159 (NYHDVGICKAVAMLWKL) are mitochondrial intermembrane.

This sequence belongs to the CybS family. As to quaternary structure, component of complex II composed of four subunits: the flavoprotein (FP) SDHA, iron-sulfur protein (IP) SDHB, and a cytochrome b560 composed of SDHC and SDHD.

It is found in the mitochondrion inner membrane. Its pathway is carbohydrate metabolism; tricarboxylic acid cycle. Membrane-anchoring subunit of succinate dehydrogenase (SDH) that is involved in complex II of the mitochondrial electron transport chain and is responsible for transferring electrons from succinate to ubiquinone (coenzyme Q). SDH also oxidizes malate to the non-canonical enol form of oxaloacetate, enol-oxaloacetate. Enol-oxaloacetate, which is a potent inhibitor of the succinate dehydrogenase activity, is further isomerized into keto-oxaloacetate. The protein is Succinate dehydrogenase [ubiquinone] cytochrome b small subunit, mitochondrial (SDHD) of Pongo abelii (Sumatran orangutan).